Consider the following 520-residue polypeptide: Keratin, type II cytoskeletal 4 (520 aa).

Residues 1 to 136 are head; the sequence is MIARQQCVRG…DPEIQKVRTE (136 aa). At Arg-13 the chain carries Omega-N-methylarginine. The interval 137 to 172 is coil 1A; it reads EREQIKLLNNKFASFIDKVQFLEQQNKVLETKWNLL. One can recognise an IF rod domain in the interval 137 to 450; the sequence is EREQIKLLNN…KLLEGEEYRM (314 aa). Residues 173–191 are linker 1; it reads QQQTTTTSSKNLEPLFETY. The segment at 192–284 is coil 1B; sequence LSVLRKQLDT…LYDAELSQMQ (93 aa). The tract at residues 285–307 is linker 12; sequence THVSDTSVVLSMDNNRNLDLDSI. A coil 2 region spans residues 308 to 447; that stretch reads IAEVRAQYEE…TYRKLLEGEE (140 aa). The tract at residues 448–520 is tail; that stretch reads YRMSGECQSA…ISTTTLNKRR (73 aa). Positions 500–520 are disordered; it reads GSVSGSSSSKIISTTTLNKRR. Positions 503 to 514 are enriched in low complexity; the sequence is SGSSSSKIISTT.

Belongs to the intermediate filament family. As to quaternary structure, heterotetramer of two type I and two type II keratins. Keratin-4 is generally associated with keratin-13. In terms of tissue distribution, detected in the suprabasal layer of the stratified epithelium of the esophagus, exocervix, vagina, mouth and lingual mucosa, and in cells and cell clusters in the mucosa and serous gland ducts of the esophageal submucosa (at protein level). Expressed widely in the exocervix and esophageal epithelium, with lowest levels detected in the basal cell layer.

The polypeptide is Keratin, type II cytoskeletal 4 (KRT4) (Homo sapiens (Human)).